The following is a 274-amino-acid chain: Protein TIFY 11A (274 aa).

Disordered stretches follow at residues S49 to G95 and P139 to N176. The Tify domain occupies S92 to Q127. Residues P139–S150 are compositionally biased toward polar residues. Residues D161 to R185 adopt a coiled-coil conformation. A Jas motif is present at residues I182–Q206. Residues A183 to R190 carry the Nuclear localization signal motif. Residues Q206–L274 form a disordered region. A compositionally biased stretch (basic and acidic residues) spans I249–L274.

It belongs to the TIFY/JAZ family. As to quaternary structure, homo- and heterodimer. Interacts with MYC2, MYC3, MYC4, AFPH2/NINJA, TIFY10A/JAZ1, TIFY10B/JAZ2, TIFY11B/JAZ6, TIFY5A/JAZ8 and TIFY3B/JAZ12. In terms of assembly, (Microbial infection) Interacts with the pathogenic Pseudomonas syringae HopZ1a protein. In terms of processing, (Microbial infection) Acetylated by Pseudomonas syringae HopZ1a. Post-translationally, ubiquitinated. Targeted for degradation by the SCF(COI1) E3 ubiquitin ligase-proteasome pathway during jasmonate signaling.

It localises to the nucleus. Its function is as follows. Repressor of jasmonate responses. This Arabidopsis thaliana (Mouse-ear cress) protein is Protein TIFY 11A.